Consider the following 402-residue polypeptide: Tryptophan synthase beta chain (402 aa).

The residue at position 88 (lysine 88) is an N6-(pyridoxal phosphate)lysine.

It belongs to the TrpB family. In terms of assembly, tetramer of two alpha and two beta chains. Requires pyridoxal 5'-phosphate as cofactor.

The catalysed reaction is (1S,2R)-1-C-(indol-3-yl)glycerol 3-phosphate + L-serine = D-glyceraldehyde 3-phosphate + L-tryptophan + H2O. It functions in the pathway amino-acid biosynthesis; L-tryptophan biosynthesis; L-tryptophan from chorismate: step 5/5. Functionally, the beta subunit is responsible for the synthesis of L-tryptophan from indole and L-serine. The protein is Tryptophan synthase beta chain (trpB) of Pasteurella multocida (strain Pm70).